We begin with the raw amino-acid sequence, 180 residues long: Large ribosomal subunit protein uL5c (180 aa).

Belongs to the universal ribosomal protein uL5 family. In terms of assembly, part of the 50S ribosomal subunit; contacts the 5S rRNA.

The protein localises to the plastid. It is found in the chloroplast. Functionally, binds 5S rRNA, forms part of the central protuberance of the 50S subunit. This chain is Large ribosomal subunit protein uL5c (rpl5), found in Tetradesmus obliquus (Green alga).